The following is a 541-amino-acid chain: uncharacterized protein (541 aa).

Transmembrane regions (helical) follow at residues 57-77, 90-110, 144-164, 167-187, 221-241, and 257-277; these read LVVT…TIAI, LTFG…SYAL, VGHL…YGLI, AFIP…ATAT, MVVW…MAMF, and VLII…ILAW. In terms of domain architecture, HAMP spans 278 to 329; the sequence is LTATPVRVVRAALRRVERGELRTNLVVFDGTELGELQRGFNAMVAGLRERER. The Guanylate cyclase domain maps to 361–485; sequence AVVFIDIVGS…EPVNEAARLC (125 aa).

This sequence belongs to the adenylyl cyclase class-3 family.

The protein localises to the cell membrane. This is an uncharacterized protein from Mycobacterium tuberculosis (strain CDC 1551 / Oshkosh).